The sequence spans 434 residues: Alpha-enolase (434 aa).

N-acetylserine is present on Ser2. Lys5 is subject to N6-acetyllysine. Mg(2+) is bound at residue Ser40. The residue at position 44 (Tyr44) is a Phosphotyrosine. At Lys60 the chain carries N6-acetyllysine; alternate. Residue Lys60 is modified to N6-succinyllysine; alternate. N6-acetyllysine occurs at positions 64 and 71. An N6-acetyllysine; alternate modification is found at Lys89. An N6-succinyllysine; alternate modification is found at Lys89. 2 positions are modified to N6-acetyllysine: Lys92 and Lys126. Substrate-binding residues include His158 and Glu167. N6-acetyllysine is present on residues Lys193 and Lys199. N6-acetyllysine; alternate is present on Lys202. Lys202 is covalently cross-linked (Glycyl lysine isopeptide (Lys-Gly) (interchain with G-Cter in SUMO2); alternate). Glu210 serves as the catalytic Proton donor. N6-acetyllysine; alternate occurs at positions 228 and 233. Lys228 carries the N6-succinyllysine; alternate modification. Position 228 is an N6-(2-hydroxyisobutyryl)lysine; alternate (Lys228). Position 233 is an N6-malonyllysine; alternate (Lys233). Mg(2+) is bound at residue Asp245. Ser254 is subject to Phosphoserine. Residue Lys256 is modified to N6-acetyllysine. Ser263 carries the phosphoserine modification. Lys281 bears the N6-acetyllysine; alternate mark. The residue at position 281 (Lys281) is an N6-(2-hydroxyisobutyryl)lysine; alternate. The residue at position 287 (Tyr287) is a Phosphotyrosine. Ser291 carries the phosphoserine modification. Residues Glu293 and Asp318 each coordinate Mg(2+). Positions 293 and 318 each coordinate substrate. Lys335 and Lys343 each carry N6-acetyllysine. The active-site Proton acceptor is Lys343. Substrate contacts are provided by residues 370 to 373 (SHRS) and Lys394. The interval 405-434 (AKYNQILRIEEELGSKAKFAGRSFRNPLAK) is required for interaction with PLG. Lys406 carries the N6-acetyllysine modification. Lys420 bears the N6-acetyllysine; alternate mark. Lys420 is subject to N6-succinyllysine; alternate. An N6-malonyllysine; alternate modification is found at Lys420.

The protein belongs to the enolase family. As to quaternary structure, mammalian enolase is composed of 3 isozyme subunits, alpha, beta and gamma, which can form homodimers or heterodimers which are cell-type and development-specific. ENO1 interacts with PLG in the neuronal plasma membrane and promotes its activation. The C-terminal lysine is required for this binding. Interacts with ENO4 and PGAM2. Interacts with CMTM6. The cofactor is Mg(2+). ISGylated. Post-translationally, lysine 2-hydroxyisobutyrylation (Khib) by p300/EP300 activates the phosphopyruvate hydratase activity. In terms of tissue distribution, the alpha/alpha homodimer is expressed in embryo and in most adult tissues. The alpha/beta heterodimer and the beta/beta homodimer are found in striated muscle, and the alpha/gamma heterodimer and the gamma/gamma homodimer in neurons.

The protein localises to the cytoplasm. It is found in the cell membrane. It carries out the reaction (2R)-2-phosphoglycerate = phosphoenolpyruvate + H2O. It participates in carbohydrate degradation; glycolysis; pyruvate from D-glyceraldehyde 3-phosphate: step 4/5. Its function is as follows. Glycolytic enzyme the catalyzes the conversion of 2-phosphoglycerate to phosphoenolpyruvate. In addition to glycolysis, involved in various processes such as growth control, hypoxia tolerance and allergic responses. May also function in the intravascular and pericellular fibrinolytic system due to its ability to serve as a receptor and activator of plasminogen on the cell surface of several cell-types such as leukocytes and neurons. Stimulates immunoglobulin production. The polypeptide is Alpha-enolase (ENO1) (Bos taurus (Bovine)).